The primary structure comprises 369 residues: Histidinol-phosphate aminotransferase 2 (369 aa).

The residue at position 227 (K227) is an N6-(pyridoxal phosphate)lysine.

Belongs to the class-II pyridoxal-phosphate-dependent aminotransferase family. Histidinol-phosphate aminotransferase subfamily. Homodimer. Pyridoxal 5'-phosphate is required as a cofactor.

It catalyses the reaction L-histidinol phosphate + 2-oxoglutarate = 3-(imidazol-4-yl)-2-oxopropyl phosphate + L-glutamate. It participates in amino-acid biosynthesis; L-histidine biosynthesis; L-histidine from 5-phospho-alpha-D-ribose 1-diphosphate: step 7/9. In Mesorhizobium japonicum (strain LMG 29417 / CECT 9101 / MAFF 303099) (Mesorhizobium loti (strain MAFF 303099)), this protein is Histidinol-phosphate aminotransferase 2 (hisC2).